The primary structure comprises 391 residues: Elongation factor Tu (391 aa).

The region spanning Lys10–Glu201 is the tr-type G domain. Residues Gly19 to Thr26 are G1. Residue Gly19–Thr26 coordinates GTP. Thr26 serves as a coordination point for Mg(2+). The G2 stretch occupies residues Gly55 to Ser59. The interval Asp76–Gly79 is G3. Residues Asp76–His80 and Asn131–Asp134 contribute to the GTP site. The interval Asn131 to Asp134 is G4. The segment at Ser169–Leu171 is G5.

The protein belongs to the TRAFAC class translation factor GTPase superfamily. Classic translation factor GTPase family. EF-Tu/EF-1A subfamily. As to quaternary structure, monomer.

The protein localises to the cytoplasm. The enzyme catalyses GTP + H2O = GDP + phosphate + H(+). GTP hydrolase that promotes the GTP-dependent binding of aminoacyl-tRNA to the A-site of ribosomes during protein biosynthesis. The protein is Elongation factor Tu of Roseobacter denitrificans (strain ATCC 33942 / OCh 114) (Erythrobacter sp. (strain OCh 114)).